The chain runs to 121 residues: Large ribosomal subunit protein bL21c (121 aa).

Belongs to the bacterial ribosomal protein bL21 family. In terms of assembly, part of the 50S ribosomal subunit.

It is found in the plastid. The protein resides in the chloroplast. Functionally, this protein binds to 23S rRNA. The protein is Large ribosomal subunit protein bL21c of Chaetosphaeridium globosum (Charophycean green alga).